A 105-amino-acid polypeptide reads, in one-letter code: Large ribosomal subunit protein uL24 (105 aa).

It belongs to the universal ribosomal protein uL24 family. Part of the 50S ribosomal subunit.

In terms of biological role, one of two assembly initiator proteins, it binds directly to the 5'-end of the 23S rRNA, where it nucleates assembly of the 50S subunit. Functionally, one of the proteins that surrounds the polypeptide exit tunnel on the outside of the subunit. The protein is Large ribosomal subunit protein uL24 of Sphingopyxis alaskensis (strain DSM 13593 / LMG 18877 / RB2256) (Sphingomonas alaskensis).